Here is a 545-residue protein sequence, read N- to C-terminus: MSTAANEPSRSRGKAPAGERVADWADGRLGIYSLAKANMRKIFPDHWSFMLGEVCLYSFIIIILTGVYLTLFFHPSMAEVEYHGSYVPLQGQMMSEAYASTLDISFDVRGGLLIRQIHHWAALIFLAGMFVHMMRVFFTGAFRKPREVNWLFGFLLLVLGMFTGFTGYSLPDDLLSGTGIRFMEGAILSVPIVGTYISFFLFGGEFPGHDFVSRFYSIHILLLPGIMLGLLVGHLILVFYHKHTQFAGPGKTNKNVVGMPLLPVYTAKAGGFFFLVFGVISVVSAIATINPIWAIGPYRPDQVSTGAQPDWYMGFSEGLIRVMPGWEINAWGHTLVLGVFVPLLIFPLVLAAIAVYPFIESWVTGDKREHHILDRPRNAPTRTAFGVAWLTVYFVLLIGGGNDLWATHFHLSINAITWFVRIAFFVGPVVAFIATKRICLGLQRRDKDKVLHGRESGIIKRLPHGEFIEVHEPLSQEQLHTLTAHEQYQPAEIGPTVDENGVERKVSGTQKLRAKLSESYYGEESQIPKPTVEEYKEITSGHGHH.

Residues 54–74 (VCLYSFIIIILTGVYLTLFFH) form a helical membrane-spanning segment. Heme-binding residues include H118 and H132. 3 helical membrane passes run 122-142 (ALIF…TGAF), 150-170 (WLFG…GYSL), and 182-202 (FMEG…FFLF). Positions 219 and 234 each coordinate heme. 5 consecutive transmembrane segments (helical) span residues 220-240 (ILLL…LVFY), 269-289 (AGGF…IATI), 335-355 (LVLG…AIAV), 385-405 (FGVA…NDLW), and 413-433 (INAI…VAFI).

This sequence belongs to the cytochrome b family. As to quaternary structure, the cytochrome bc1 complex is composed of a cytochrome b (QcrB), the Rieske iron-sulfur protein (QcrA) and a diheme cytochrome c (QcrC) subunit. Heme is required as a cofactor.

It localises to the cell membrane. It catalyses the reaction a quinol + 2 Fe(III)-[cytochrome c](out) = a quinone + 2 Fe(II)-[cytochrome c](out) + 2 H(+)(out). In terms of biological role, cytochrome b subunit of the cytochrome bc1 complex, an essential component of the respiratory electron transport chain required for ATP synthesis. The bc1 complex catalyzes the oxidation of ubiquinol and the reduction of cytochrome c in the respiratory chain. The bc1 complex operates through a Q-cycle mechanism that couples electron transfer to generation of the proton gradient that drives ATP synthesis. The cytochrome b subunit contains two ubiquinol reactive sites: the oxidation (QP) site and the reduction (QN) site. This Streptomyces coelicolor (strain ATCC BAA-471 / A3(2) / M145) protein is Cytochrome bc1 complex cytochrome b subunit (qcrB).